The primary structure comprises 194 residues: Glycerol-3-phosphate acyltransferase (194 aa).

The next 5 helical transmembrane spans lie at 4–24, 80–100, 112–132, 137–157, and 161–181; these read ELIL…LLLA, WVAA…FLGF, VFLG…IGIV, YISL…AAVE, and LLVG…RENI.

Belongs to the PlsY family. As to quaternary structure, probably interacts with PlsX.

The protein localises to the cell inner membrane. It catalyses the reaction an acyl phosphate + sn-glycerol 3-phosphate = a 1-acyl-sn-glycero-3-phosphate + phosphate. It participates in lipid metabolism; phospholipid metabolism. In terms of biological role, catalyzes the transfer of an acyl group from acyl-phosphate (acyl-PO(4)) to glycerol-3-phosphate (G3P) to form lysophosphatidic acid (LPA). This enzyme utilizes acyl-phosphate as fatty acyl donor, but not acyl-CoA or acyl-ACP. This is Glycerol-3-phosphate acyltransferase from Geobacter sulfurreducens (strain ATCC 51573 / DSM 12127 / PCA).